A 53-amino-acid chain; its full sequence is UPF0391 membrane protein TM1040_2720 (53 aa).

Transmembrane regions (helical) follow at residues 4 to 24 (WALA…GGIA) and 29 to 48 (GIAQ…ALIL).

Belongs to the UPF0391 family.

It localises to the cell membrane. This is UPF0391 membrane protein TM1040_2720 from Ruegeria sp. (strain TM1040) (Silicibacter sp.).